A 520-amino-acid polypeptide reads, in one-letter code: Putative thymidine phosphorylase 1 (520 aa).

This sequence belongs to the thymidine/pyrimidine-nucleoside phosphorylase family. Type 2 subfamily.

It carries out the reaction thymidine + phosphate = 2-deoxy-alpha-D-ribose 1-phosphate + thymine. In Cupriavidus necator (strain ATCC 17699 / DSM 428 / KCTC 22496 / NCIMB 10442 / H16 / Stanier 337) (Ralstonia eutropha), this protein is Putative thymidine phosphorylase 1.